The sequence spans 273 residues: Tryptophan synthase alpha chain (273 aa).

Residues E49 and D60 each act as proton acceptor in the active site.

The protein belongs to the TrpA family. As to quaternary structure, tetramer of two alpha and two beta chains.

It carries out the reaction (1S,2R)-1-C-(indol-3-yl)glycerol 3-phosphate + L-serine = D-glyceraldehyde 3-phosphate + L-tryptophan + H2O. Its pathway is amino-acid biosynthesis; L-tryptophan biosynthesis; L-tryptophan from chorismate: step 5/5. In terms of biological role, the alpha subunit is responsible for the aldol cleavage of indoleglycerol phosphate to indole and glyceraldehyde 3-phosphate. The protein is Tryptophan synthase alpha chain of Halorhodospira halophila (strain DSM 244 / SL1) (Ectothiorhodospira halophila (strain DSM 244 / SL1)).